A 426-amino-acid polypeptide reads, in one-letter code: Maintenance of mitochondrial morphology protein 1 (426 aa).

The Lumenal portion of the chain corresponds to 1–100 (MTDSENESTE…KFSGWSFAQG (100 aa)). Residues 101-121 (FFVGQLSIVLLFIFFLKFFIF) traverse the membrane as a helical segment. Topologically, residues 122–426 (SDEPSKSKNP…NTREEKPTEL (305 aa)) are cytoplasmic. An SMP-LTD domain is found at 194 to 409 (PAESLDWFNV…EPRFQFVRLP (216 aa)).

This sequence belongs to the MMM1 family. Homodimer. Component of the ER-mitochondria encounter structure (ERMES) or MDM complex, composed of MMM1, MDM10, MDM12 and MDM34. An MMM1 homodimer associates with one molecule of MDM12 on each side in a pairwise head-to-tail manner, and the SMP-LTD domains of MMM1 and MDM12 generate a continuous hydrophobic tunnel for phospholipid trafficking.

The protein localises to the endoplasmic reticulum membrane. Functionally, component of the ERMES/MDM complex, which serves as a molecular tether to connect the endoplasmic reticulum (ER) and mitochondria. Components of this complex are involved in the control of mitochondrial shape and protein biogenesis, and function in nonvesicular lipid trafficking between the ER and mitochondria. The MDM12-MMM1 subcomplex functions in the major beta-barrel assembly pathway that is responsible for biogenesis of all outer membrane beta-barrel proteins, and acts in a late step after the SAM complex. The MDM10-MDM12-MMM1 subcomplex further acts in the TOM40-specific pathway after the action of the MDM12-MMM1 complex. Essential for establishing and maintaining the structure of mitochondria and maintenance of mtDNA nucleoids. The polypeptide is Maintenance of mitochondrial morphology protein 1 (Saccharomyces cerevisiae (strain AWRI1631) (Baker's yeast)).